The following is a 506-amino-acid chain: 2,3-bisphosphoglycerate-independent phosphoglycerate mutase (506 aa).

Residues aspartate 13 and serine 63 each contribute to the Mn(2+) site. Residue serine 63 is the Phosphoserine intermediate of the active site. Substrate contacts are provided by residues histidine 124, 153–154 (RD), arginine 183, arginine 189, 254–257 (RADR), and lysine 330. Residues aspartate 396, histidine 400, aspartate 437, histidine 438, and histidine 456 each contribute to the Mn(2+) site.

It belongs to the BPG-independent phosphoglycerate mutase family. In terms of assembly, monomer. Requires Mn(2+) as cofactor.

It carries out the reaction (2R)-2-phosphoglycerate = (2R)-3-phosphoglycerate. The protein operates within carbohydrate degradation; glycolysis; pyruvate from D-glyceraldehyde 3-phosphate: step 3/5. Functionally, catalyzes the interconversion of 2-phosphoglycerate and 3-phosphoglycerate. This Cereibacter sphaeroides (strain KD131 / KCTC 12085) (Rhodobacter sphaeroides) protein is 2,3-bisphosphoglycerate-independent phosphoglycerate mutase.